Consider the following 318-residue polypeptide: Protoheme IX farnesyltransferase (318 aa).

A run of 9 helical transmembrane segments spans residues 37–57 (LVIFTALVGIAVAPGGIHPVI), 58–78 (AFTALLCIAVGAGASGALNMW), 100–120 (VTAREAAVFGSILSVFAVMTM), 122–142 (VLVNWVAAALLAFTIFFYLVV), 155–175 (IVIGGAAGAFPPMIGWAAVTG), 182–202 (FVLFLIIFMWTPPHFWALALY), 228–248 (IMLYSLALVPVTLLPGFLGFA), 251–271 (LYMGATAALGAGFLWLAFGIW), and 291–311 (ILYLFLIFSLLLVEKMLGLGG).

Belongs to the UbiA prenyltransferase family. Protoheme IX farnesyltransferase subfamily.

The protein resides in the cell inner membrane. The catalysed reaction is heme b + (2E,6E)-farnesyl diphosphate + H2O = Fe(II)-heme o + diphosphate. It functions in the pathway porphyrin-containing compound metabolism; heme O biosynthesis; heme O from protoheme: step 1/1. Functionally, converts heme B (protoheme IX) to heme O by substitution of the vinyl group on carbon 2 of heme B porphyrin ring with a hydroxyethyl farnesyl side group. The sequence is that of Protoheme IX farnesyltransferase from Parvibaculum lavamentivorans (strain DS-1 / DSM 13023 / NCIMB 13966).